The primary structure comprises 91 residues: MAIKMRLQRFGVHKRPFYRVVASDSRVTRDGKFLDIVGTYDTILNIIKLDNEKVQKWLSCGAQPTQTVKKILKKNFVFQKDNQIKKPQTAK.

This sequence belongs to the bacterial ribosomal protein bS16 family.

This is Small ribosomal subunit protein bS16 from Phytoplasma australiense.